Here is a 193-residue protein sequence, read N- to C-terminus: MLEVHIPSVGPEAEGPRQSPEKSHMVFRVEVLCSGRRHTVPRRYSEFHALHKRIKKLYKVPDFPSKRLPNWRTRGLEQRRQGLEAYIQGILYLNQEVPKELLEFLRLRHFPTDPKASNWGTLREFLPGDSSSQQHQRPVLSFHVDPYVCNPSPESLPNVVVNGVLQGLYSFSISPDKAQPKAACHPAPLPPMP.

Residues 1 to 21 (MLEVHIPSVGPEAEGPRQSPE) are disordered. A PX domain is found at 1-118 (MLEVHIPSVG…HFPTDPKASN (118 aa)). A 1,2-diacyl-sn-glycero-3-phospho-(1D-myo-inositol-3-phosphate) contacts are provided by Arg-43, Ser-45, Lys-66, and Arg-79.

This sequence belongs to the sorting nexin family. (Microbial infection) Interacts with P.falciparum (strain 3D7) CK1. In terms of tissue distribution, expressed in erythrocytes (at protein level).

It localises to the cytoplasmic vesicle membrane. Its function is as follows. May be involved in several stages of intracellular trafficking. Interacts with membranes containing phosphatidylinositol 3-phosphate (PtdIns(3P)). This chain is Sorting nexin-22 (SNX22), found in Homo sapiens (Human).